The chain runs to 71 residues: ATP synthase F(0) complex subunit e, mitochondrial (71 aa).

Lys34 is modified (N6-acetyllysine).

It belongs to the ATPase e subunit family. Component of the ATP synthase complex composed at least of ATP5F1A/subunit alpha, ATP5F1B/subunit beta, ATP5MC1/subunit c (homooctomer), MT-ATP6/subunit a, MT-ATP8/subunit 8, ATP5ME/subunit e, ATP5MF/subunit f, ATP5MG/subunit g, ATP5MK/subunit k, ATP5MJ/subunit j, ATP5F1C/subunit gamma, ATP5F1D/subunit delta, ATP5F1E/subunit epsilon, ATP5PF/subunit F6, ATP5PB/subunit b, ATP5PD/subunit d, ATP5PO/subunit OSCP. ATP synthase complex consists of a soluble F(1) head domain (subunits alpha(3) and beta(3)) - the catalytic core - and a membrane F(0) domain - the membrane proton channel (subunits c, a, 8, e, f, g, k and j). These two domains are linked by a central stalk (subunits gamma, delta, and epsilon) rotating inside the F1 region and a stationary peripheral stalk (subunits F6, b, d, and OSCP).

It localises to the mitochondrion. The protein localises to the mitochondrion inner membrane. Subunit e, of the mitochondrial membrane ATP synthase complex (F(1)F(0) ATP synthase or Complex V) that produces ATP from ADP in the presence of a proton gradient across the membrane which is generated by electron transport complexes of the respiratory chain. ATP synthase complex consist of a soluble F(1) head domain - the catalytic core - and a membrane F(1) domain - the membrane proton channel. These two domains are linked by a central stalk rotating inside the F(1) region and a stationary peripheral stalk. During catalysis, ATP synthesis in the catalytic domain of F(1) is coupled via a rotary mechanism of the central stalk subunits to proton translocation. In vivo, can only synthesize ATP although its ATP hydrolase activity can be activated artificially in vitro. Part of the complex F(0) domain. This is ATP synthase F(0) complex subunit e, mitochondrial from Bos taurus (Bovine).